Consider the following 393-residue polypeptide: Bone morphogenetic protein 2 (393 aa).

The first 19 residues, 1-19 (MVAGTRCLLVLLLPQVLLG), serve as a signal peptide directing secretion. Residues 20–279 (GAAGLIPELG…GHPLHKREKR (260 aa)) constitute a propeptide, cleaved by PCSK5. Ser-85 is modified (phosphoserine). Asn-133, Asn-161, and Asn-197 each carry an N-linked (GlcNAc...) asparagine glycan. The disordered stretch occupies residues 268 to 290 (GKGHPLHKREKRQAKHKQRKRLK). A compositionally biased stretch (basic residues) spans 271 to 290 (HPLHKREKRQAKHKQRKRLK). Intrachain disulfides connect Cys-293–Cys-358, Cys-322–Cys-390, and Cys-326–Cys-392. Asn-335 carries N-linked (GlcNAc...) asparagine glycosylation.

It belongs to the TGF-beta family. In terms of assembly, homodimer; disulfide-linked. Interacts with SOSTDC1. Interacts with GREM2, RGMA, RGMB and RGMC. Interacts with ASPN. Interacts with MAFP5. Interacts with FBN1 (via N-terminal domain) and FBN2. Interacts with type I receptor BMPR1A. Interacts with type II receptor BMPR2. Interacts with SCUBE3. Interacts with TNFAIP6 (primarily via Link domain); this interaction is inhibited by hyaluronan. Interacts with ERFE. Interacts with BMPR1A/ALK3; the interaction may induce HAMP expression. Forms heterodimers with BMP6 in vitro; the heterodimer then binds to its receptor BMPR1A /ALK3 and may induce HAMP expression. Interacts with TGFBR3. Expressed in femur, calvaria, trachea, lung and ovary.

Its subcellular location is the secreted. Growth factor of the TGF-beta superfamily that plays essential roles in many developmental processes, including cardiogenesis, neurogenesis, and osteogenesis. Induces cartilage and bone formation. Initiates the canonical BMP signaling cascade by associating with type I receptor BMPR1A and type II receptor BMPR2. Once all three components are bound together in a complex at the cell surface, BMPR2 phosphorylates and activates BMPR1A. In turn, BMPR1A propagates signal by phosphorylating SMAD1/5/8 that travel to the nucleus and act as activators and repressors of transcription of target genes. Also acts to promote expression of HAMP, via the interaction with its receptor BMPR1A/ALK3. Can also signal through non-canonical pathways such as ERK/MAP kinase signaling cascade that regulates osteoblast differentiation. Also stimulates the differentiation of myoblasts into osteoblasts via the EIF2AK3-EIF2A-ATF4 pathway by stimulating EIF2A phosphorylation which leads to increased expression of ATF4 which plays a central role in osteoblast differentiation. Acts as a positive regulator of odontoblast differentiation during mesenchymal tooth germ formation, expression is repressed during the bell stage by MSX1-mediated inhibition of CTNNB1 signaling. In Rattus norvegicus (Rat), this protein is Bone morphogenetic protein 2 (Bmp2).